We begin with the raw amino-acid sequence, 103 residues long: Large ribosomal subunit protein bL21 (103 aa).

The protein belongs to the bacterial ribosomal protein bL21 family. As to quaternary structure, part of the 50S ribosomal subunit. Contacts protein L20.

In terms of biological role, this protein binds to 23S rRNA in the presence of protein L20. This is Large ribosomal subunit protein bL21 from Sodalis glossinidius (strain morsitans).